The following is a 252-amino-acid chain: Imidazole glycerol phosphate synthase subunit HisF (252 aa).

Catalysis depends on residues Asp-11 and Asp-130.

The protein belongs to the HisA/HisF family. As to quaternary structure, heterodimer of HisH and HisF.

The protein localises to the cytoplasm. The enzyme catalyses 5-[(5-phospho-1-deoxy-D-ribulos-1-ylimino)methylamino]-1-(5-phospho-beta-D-ribosyl)imidazole-4-carboxamide + L-glutamine = D-erythro-1-(imidazol-4-yl)glycerol 3-phosphate + 5-amino-1-(5-phospho-beta-D-ribosyl)imidazole-4-carboxamide + L-glutamate + H(+). It participates in amino-acid biosynthesis; L-histidine biosynthesis; L-histidine from 5-phospho-alpha-D-ribose 1-diphosphate: step 5/9. IGPS catalyzes the conversion of PRFAR and glutamine to IGP, AICAR and glutamate. The HisF subunit catalyzes the cyclization activity that produces IGP and AICAR from PRFAR using the ammonia provided by the HisH subunit. The protein is Imidazole glycerol phosphate synthase subunit HisF of Pelotomaculum thermopropionicum (strain DSM 13744 / JCM 10971 / SI).